The following is a 459-amino-acid chain: NADH oxidase (459 aa).

Residue asparagine 10 participates in FAD binding. Histidine 11 functions as the Proton acceptor in the catalytic mechanism. 9 residues coordinate FAD: alanine 12, aspartate 34, glutamine 35, cysteine 44, valine 81, alanine 110, serine 113, lysine 143, and tyrosine 172. The active-site Redox-active is the cysteine 44. Cysteine 44 carries the cysteine sulfinic acid (-SO2H) modification. NAD(+)-binding residues include isoleucine 173, aspartate 192, tyrosine 201, and glycine 256. Aspartate 294 contacts FAD. Alanine 310 provides a ligand contact to NAD(+). Positions 311, 312, and 313 each coordinate FAD. Glycine 341 serves as a coordination point for NAD(+). Position 439 (phenylalanine 439) interacts with FAD.

It belongs to the class-III pyridine nucleotide-disulfide oxidoreductase family. It depends on FAD as a cofactor.

It is found in the secreted. The protein resides in the cell wall. It carries out the reaction 2 NADH + O2 + 2 H(+) = 2 NAD(+) + 2 H2O. In terms of biological role, catalyzes the four-electron reduction of molecular oxygen to water. Plays a role in redox balance maintenance. May be involved in mediating bacterial adhesion to host cells. May be considered a potential virulence factor. This chain is NADH oxidase, found in Streptococcus pneumoniae (strain ATCC BAA-255 / R6).